Consider the following 273-residue polypeptide: MSHPLIFPDFDPVAFHIGPLAVRWYALAYMVSFIIALPIARRLNRLAPEVATNEQVDDFLFYAILGVLLGGRLGYVLFYRPMDYLSHPLEIFKTWDGGMSFHGGALGVILALAYFSWKTRLSFLAFADRIVPVVPIGLGLGRCANFVNGELWGRPASPDLPWAMIFPTGGPIPRHPSELYEALTEGVLLLCVMLFAASRPQVRERFGFLSGLFLFGYACARSFCEFFRQPDANIGFLSGGTTMGQLLCIPMALAGMGLMVYAMRRPAQVSAHV.

3 helical membrane-spanning segments follow: residues 20 to 40 (LAVR…LPIA), 59 to 79 (FLFY…VLFY), and 97 to 117 (GGMS…YFSW). Arginine 142 contacts a 1,2-diacyl-sn-glycero-3-phospho-(1'-sn-glycerol). A run of 2 helical transmembrane segments spans residues 206-226 (FGFL…FCEF) and 243-263 (MGQL…VYAM).

This sequence belongs to the Lgt family.

It localises to the cell inner membrane. The catalysed reaction is L-cysteinyl-[prolipoprotein] + a 1,2-diacyl-sn-glycero-3-phospho-(1'-sn-glycerol) = an S-1,2-diacyl-sn-glyceryl-L-cysteinyl-[prolipoprotein] + sn-glycerol 1-phosphate + H(+). It participates in protein modification; lipoprotein biosynthesis (diacylglyceryl transfer). In terms of biological role, catalyzes the transfer of the diacylglyceryl group from phosphatidylglycerol to the sulfhydryl group of the N-terminal cysteine of a prolipoprotein, the first step in the formation of mature lipoproteins. This is Phosphatidylglycerol--prolipoprotein diacylglyceryl transferase from Gluconobacter oxydans (strain 621H) (Gluconobacter suboxydans).